Here is a 434-residue protein sequence, read N- to C-terminus: Septin-6 (434 aa).

Ala2 bears the N-acetylalanine mark. Ser27 is subject to Phosphoserine. One can recognise a Septin-type G domain in the interval 39–305 (QGFCFNILCV…ELYRRCKLEE (267 aa)). Residues 49 to 56 (GETGLGKS) form a G1 motif region. GTP is bound by residues 49–56 (GETGLGKS), Gly104, 185–193 (KSDAISKSE), Gly239, and Arg254. Residues 101-104 (STVG) are G3 motif. The G4 motif stretch occupies residues 184 to 187 (AKSD). Residues 321–407 (QETYEAKRNE…QRKAAAELLQ (87 aa)) are a coiled coil. Lys367 carries the post-translational modification N6-acetyllysine. The interval 403–434 (AELLQSQGSQAGGSQTLKRDKEKKNNPWLCIE) is disordered. The span at 407-417 (QSQGSQAGGSQ) shows a compositional bias: low complexity. Ser416 carries the post-translational modification Phosphoserine. Thr418 carries the post-translational modification Phosphothreonine.

This sequence belongs to the TRAFAC class TrmE-Era-EngA-EngB-Septin-like GTPase superfamily. Septin GTPase family. Septins polymerize into heterooligomeric protein complexes that form filaments, and associate with cellular membranes, actin filaments and microtubules. GTPase activity is required for filament formation. Filaments are assembled from asymmetrical heterotrimers, composed of SEPTIN2, SEPTIN6 and SEPTIN7 that associate head-to-head to form a hexameric unit. Within the trimer, directly interacts with SEPTIN2 and SEPTIN7. Also interacts with SEPTIN9 and SEPTIN12. Interaction with SEPTIN12 alters filament structure. Component of a septin core octameric complex consisting of SEPTIN12, SEPTIN7, SEPTIN6 and SEPTIN2 or SEPTIN4 in the order 12-7-6-2-2-6-7-12 or 12-7-6-4-4-6-7-12 and located in the sperm annulus. Interacts with SOCS7. Interacts with HNRNPA1. Expressed in the cerebral cortex (at protein level). Associated with synaptic vesicles in various brain regions, including glomeruli of the olfactory bulb (at protein level).

It is found in the cytoplasm. The protein resides in the cytoskeleton. It localises to the spindle. Its subcellular location is the chromosome. The protein localises to the centromere. It is found in the kinetochore. The protein resides in the cleavage furrow. It localises to the midbody. Its subcellular location is the cell projection. The protein localises to the cilium. It is found in the flagellum. Its function is as follows. Filament-forming cytoskeletal GTPase. Required for normal organization of the actin cytoskeleton. Involved in cytokinesis. Forms a filamentous structure with SEPTIN12, SEPTIN6, SEPTIN2 and probably SEPTIN4 at the sperm annulus which is required for the structural integrity and motility of the sperm tail during postmeiotic differentiation. This Mus musculus (Mouse) protein is Septin-6.